A 1022-amino-acid polypeptide reads, in one-letter code: MGKGAASEKYQPAATSENAKNSKKSKSKTTDLDELKKEVSLDDHKLNLDELHQKYGTDLTQGLTPARAKEILARDGPNALTPPPTTPEWIKFCRQLFGGFSILLWTGAILCFLAYGIQVATVDNPANDNLYLGVVLSTVVIITGCFSYYQEAKSSKIMDSFKNMVPQQALVIRDGEKSSINAEQVVVGDLVEVKGGDRIPADLRIISACSCKVDNSSLTGESEPQSRSPEYSSENPLETKNIAFFSTNCVEGTARGIVINIGDHTVMGRIATLASGLEVGQTPIAAEIEHFIHIITGVAVFLGVSFFILSLILGYTWLEAVIFLIGIIVANVPEGLLATVTVCLTLTAKRMARKNCLVKNLEAVETLGSTSTICSDKTGTLTQNRMTVAHMWFDNQIHEADTTENQSGISFDKTSLSWNALSRIAALCNRAVFQAGQDSVPILKRSVAGDASESALLKCIELCCGSVSQMRDRNPKIVEIPFNSTNKYQLSIHENDKADSRYLLVMKGAPERILDRCSTILLNGEDKPLNEEMKEAFQNAYLELGGLGERVLGFCHLKLSTSKFPEGYPFDVEEPNFPITDLCFVGLMSMIDPPRAAVPDAVGKCRSAGIKVIMVTGDHPITAKAIAKGVGIISEGNETVEDIAARLNIPVNQVNPRDAKACVVHGTDLKDLSHENLDDILHYHTEIVFARTSPQQKLIIVEGCQRQGAIVAVTGDGVNDSPALKKADIGVAMGIAGSDVSKQAADMILLDDNFASIVTGVEEGRLIFDNLKKSIAYTLTSNIPEITPFLVFIIANVPLPLGTVTILCIDLGTDMVPAISLAYERAESDIMKRQPRNPKTDKLVNERLISMAYGQIGMIQALGGFFSYFVILAENGFLPIDLIGIREKWDELWTQDLEDSYGQQWTYEQRKIVEYTCHTSFFVSIVIVQWADLIICKTRRNSIFQQGMKNKILIFGLFEETALAAFLSYTPGTDIALRMYPLKPSWWFCAFPYSLIIFLYDEARRFILRRNPGGWVEQETYY.

Residues 1–5 (MGKGA) constitute a propeptide that is removed on maturation. Residues 1–34 (MGKGAASEKYQPAATSENAKNSKKSKSKTTDLDE) form a disordered region. Over 6–87 (ASEKYQPAAT…NALTPPPTTP (82 aa)) the chain is Cytoplasmic. S16 bears the Phosphoserine; by PKC mark. Residues 82–84 (PPP) are interaction with phosphoinositide-3 kinase. The helical transmembrane segment at 88-108 (EWIKFCRQLFGGFSILLWTGA) threads the bilayer. Residues 109–131 (ILCFLAYGIQVATVDNPANDNLY) lie on the Lumenal side of the membrane. The helical transmembrane segment at 132-152 (LGVVLSTVVIITGCFSYYQEA) threads the bilayer. Residues 153–288 (KSSKIMDSFK…VGQTPIAAEI (136 aa)) lie on the Cytoplasmic side of the membrane. Positions 215–235 (NSSLTGESEPQSRSPEYSSEN) are disordered. Residues 289-308 (EHFIHIITGVAVFLGVSFFI) form a helical membrane-spanning segment. Residues 309–320 (LSLILGYTWLEA) are Lumenal-facing. A helical transmembrane segment spans residues 321 to 338 (VIFLIGIIVANVPEGLLA). Topologically, residues 339-771 (TVTVCLTLTA…EEGRLIFDNL (433 aa)) are cytoplasmic. The active-site 4-aspartylphosphate intermediate is the D376. Mg(2+) contacts are provided by D716 and D720. A helical transmembrane segment spans residues 772 to 791 (KKSIAYTLTSNIPEITPFLV). Residues 792-801 (FIIANVPLPL) are Lumenal-facing. The chain crosses the membrane as a helical span at residues 802 to 822 (GTVTILCIDLGTDMVPAISLA). Residues 823 to 842 (YERAESDIMKRQPRNPKTDK) are Cytoplasmic-facing. The helical transmembrane segment at 843 to 865 (LVNERLISMAYGQIGMIQALGGF) threads the bilayer. At 866–917 (FSYFVILAENGFLPIDLIGIREKWDELWTQDLEDSYGQQWTYEQRKIVEYTC) the chain is on the lumenal side. Residues 918–937 (HTSFFVSIVIVQWADLIICK) traverse the membrane as a helical segment. Residues 938-950 (TRRNSIFQQGMKN) lie on the Cytoplasmic side of the membrane. S942 carries the phosphoserine; by PKA modification. Residues 951 to 969 (KILIFGLFEETALAAFLSY) form a helical membrane-spanning segment. Topologically, residues 970–984 (TPGTDIALRMYPLKP) are lumenal. Residues 985–1005 (SWWFCAFPYSLIIFLYDEARR) traverse the membrane as a helical segment. Over 1006–1022 (FILRRNPGGWVEQETYY) the chain is Cytoplasmic.

It belongs to the cation transport ATPase (P-type) (TC 3.A.3) family. Type IIC subfamily. In terms of assembly, the sodium/potassium-transporting ATPase is composed of a catalytic alpha subunit, an auxiliary non-catalytic beta subunit and an additional regulatory subunit.

Its subcellular location is the cell membrane. It carries out the reaction K(+)(out) + Na(+)(in) + ATP + H2O = K(+)(in) + Na(+)(out) + ADP + phosphate + H(+). In terms of biological role, this is the catalytic component of the active enzyme, which catalyzes the hydrolysis of ATP coupled with the exchange of sodium and potassium ions across the plasma membrane. This action creates the electrochemical gradient of sodium and potassium ions, providing the energy for active transport of various nutrients. This Tetronarce californica (Pacific electric ray) protein is Sodium/potassium-transporting ATPase subunit alpha.